A 236-amino-acid polypeptide reads, in one-letter code: Demethylmenaquinone methyltransferase (236 aa).

S-adenosyl-L-methionine is bound by residues Thr-62, Asp-80, 107 to 108 (DA), and Ser-124.

The protein belongs to the class I-like SAM-binding methyltransferase superfamily. MenG/UbiE family.

It catalyses the reaction a 2-demethylmenaquinol + S-adenosyl-L-methionine = a menaquinol + S-adenosyl-L-homocysteine + H(+). It participates in quinol/quinone metabolism; menaquinone biosynthesis; menaquinol from 1,4-dihydroxy-2-naphthoate: step 2/2. Its function is as follows. Methyltransferase required for the conversion of demethylmenaquinol (DMKH2) to menaquinol (MKH2). The sequence is that of Demethylmenaquinone methyltransferase from Thermobifida fusca (strain YX).